Here is a 208-residue protein sequence, read N- to C-terminus: N-(5'-phosphoribosyl)anthranilate isomerase (208 aa).

This sequence belongs to the TrpF family.

It carries out the reaction N-(5-phospho-beta-D-ribosyl)anthranilate = 1-(2-carboxyphenylamino)-1-deoxy-D-ribulose 5-phosphate. It functions in the pathway amino-acid biosynthesis; L-tryptophan biosynthesis; L-tryptophan from chorismate: step 3/5. In Neisseria meningitidis serogroup A / serotype 4A (strain DSM 15465 / Z2491), this protein is N-(5'-phosphoribosyl)anthranilate isomerase.